Consider the following 361-residue polypeptide: Probable galacturonosyltransferase-like 5 (361 aa).

The Cytoplasmic portion of the chain corresponds to Met-1 to Arg-6. A helical; Signal-anchor for type II membrane protein membrane pass occupies residues Phe-7–Phe-27. Over Ser-28 to His-361 the chain is Lumenal. Residues Asn-218 and Asn-234 are each glycosylated (N-linked (GlcNAc...) asparagine).

It belongs to the glycosyltransferase 8 family.

The protein resides in the golgi apparatus membrane. It participates in glycan metabolism; pectin biosynthesis. Its function is as follows. May be involved in pectin and/or xylans biosynthesis in cell walls. The polypeptide is Probable galacturonosyltransferase-like 5 (GATL5) (Arabidopsis thaliana (Mouse-ear cress)).